A 363-amino-acid chain; its full sequence is Spermidine/putrescine import ATP-binding protein PotA 2 (363 aa).

The ABC transporter domain occupies 6 to 236 (LEIRNVTRRF…PRSRFVADFI (231 aa)). Residue 38–45 (GPSGCGKT) participates in ATP binding.

The protein belongs to the ABC transporter superfamily. Spermidine/putrescine importer (TC 3.A.1.11.1) family. As to quaternary structure, the complex is composed of two ATP-binding proteins (PotA), two transmembrane proteins (PotB and PotC) and a solute-binding protein (PotD).

It localises to the cell inner membrane. It catalyses the reaction ATP + H2O + polyamine-[polyamine-binding protein]Side 1 = ADP + phosphate + polyamineSide 2 + [polyamine-binding protein]Side 1.. In terms of biological role, part of the ABC transporter complex PotABCD involved in spermidine/putrescine import. Responsible for energy coupling to the transport system. This chain is Spermidine/putrescine import ATP-binding protein PotA 2, found in Pseudomonas aeruginosa (strain ATCC 15692 / DSM 22644 / CIP 104116 / JCM 14847 / LMG 12228 / 1C / PRS 101 / PAO1).